The following is a 187-amino-acid chain: Protein dj-1beta (187 aa).

At Cys45 the chain carries Cysteine sulfinic acid (-SO2H). Catalysis depends on Cys104, which acts as the Nucleophile. A Cysteine sulfinic acid (-SO2H); alternate modification is found at Cys104.

Post-translationally, oxidation of Cys-45 and Cys-104 in response to oxidative stress. Levels of oxidation increase with age. In terms of tissue distribution, expressed in the head and testis (at protein level). Ubiquitously expressed at constant levels.

Its subcellular location is the mitochondrion. The protein localises to the cytoplasm. The protein resides in the nucleus. In terms of biological role, plays an important role in cell protection against oxidative stress and cell death by acting as a oxidative stress sensor. Does not play a role in methylglyoxal detoxification. Plays a role in mitochondrial function together with Pink1. In motor neurons regulates structural synaptic plasticity of locomotor behavior as part of the PTEN-phosphatidylinositol 3-kinase pathway in response to oxygen species (ROS) levels. This chain is Protein dj-1beta, found in Drosophila melanogaster (Fruit fly).